A 200-amino-acid polypeptide reads, in one-letter code: LIM domain-containing protein WLIM2a (200 aa).

LIM zinc-binding domains are found at residues 8–68 (QKCR…LFKE) and 107–167 (DKCA…LFKE).

As to quaternary structure, interacts with F-actin. In terms of tissue distribution, expressed in roots, leaves, stems, flowers and siliques. Barely detected in pollen.

Its subcellular location is the cytoplasm. The protein resides in the cytoskeleton. Its function is as follows. Binds to actin filaments and promotes cross-linking into thick bundles. Has an actin-stabilizing activity. The actin regulatory activities are not regulated by pH and [Ca(2+)]. The chain is LIM domain-containing protein WLIM2a from Arabidopsis thaliana (Mouse-ear cress).